We begin with the raw amino-acid sequence, 1341 residues long: DNA-directed RNA polymerase subunit beta (1341 aa).

Belongs to the RNA polymerase beta chain family. The RNAP catalytic core consists of 2 alpha, 1 beta, 1 beta' and 1 omega subunit. When a sigma factor is associated with the core the holoenzyme is formed, which can initiate transcription.

The enzyme catalyses RNA(n) + a ribonucleoside 5'-triphosphate = RNA(n+1) + diphosphate. In terms of biological role, DNA-dependent RNA polymerase catalyzes the transcription of DNA into RNA using the four ribonucleoside triphosphates as substrates. This Photobacterium profundum (strain SS9) protein is DNA-directed RNA polymerase subunit beta.